Reading from the N-terminus, the 111-residue chain is MIGIVLVLASLLSVGGQLCQKQATRPLTTGRRRRHLMLWLGLALICMGAAMVLWLLVLQTLPVGIAYPMLSLNFVWVTLAAWKIWHEQVPPRHWLGVALIISGIIILGSAA.

The next 3 helical transmembrane spans lie at 38–58 (LWLGLALICMGAAMVLWLLVL), 61–81 (LPVGIAYPMLSLNFVWVTLAA), and 91–111 (PRHWLGVALIISGIIILGSAA). One can recognise an EamA domain in the interval 40–109 (LGLALICMGA…IISGIIILGS (70 aa)).

It belongs to the ArnE family. As to quaternary structure, heterodimer of ArnE and ArnF.

Its subcellular location is the cell inner membrane. The protein operates within bacterial outer membrane biogenesis; lipopolysaccharide biosynthesis. Translocates 4-amino-4-deoxy-L-arabinose-phosphoundecaprenol (alpha-L-Ara4N-phosphoundecaprenol) from the cytoplasmic to the periplasmic side of the inner membrane. This chain is Probable 4-amino-4-deoxy-L-arabinose-phosphoundecaprenol flippase subunit ArnE, found in Salmonella choleraesuis (strain SC-B67).